Consider the following 884-residue polypeptide: Pyruvate, phosphate dikinase (884 aa).

Residues 1–351 (MSTRRVYFFG…LWMLQARAGK (351 aa)) form an N-terminal region. An ATP-binding site is contributed by Arg99. The linker 1 stretch occupies residues 352 to 408 (RTGFAMVRIAIDMCKEGMLTEEEALLRIDANKINEFLFKRFDPSVKPVVLGKGIPAS). The segment at 409-507 (PGAAVGVICF…KFKEGDFISI (99 aa)) is central. Thr462 bears the Phosphothreonine; by PDRP1 mark. His464 serves as the catalytic Tele-phosphohistidine intermediate. Positions 508 to 542 (NGTTGEIYNGAVQTIEPGITDDLQTIMDWSDKYRV) are linker 2. Positions 543–884 (LKIRTNADTP…IAAIKARTNQ (342 aa)) are C-terminal. Substrate contacts are provided by Arg570, Arg626, Glu753, Gly774, Thr775, Asn776, and Asp777. Glu753 serves as a coordination point for Mg(2+). Mg(2+) is bound at residue Asp777. Residue Cys839 is the Proton donor of the active site.

Belongs to the PEP-utilizing enzyme family. As to quaternary structure, homodimer. Mg(2+) is required as a cofactor. Post-translationally, phosphorylation of Thr-462 in the dark inactivates the enzyme. Dephosphorylation upon light stimulation reactivates the enzyme.

The catalysed reaction is pyruvate + phosphate + ATP = phosphoenolpyruvate + AMP + diphosphate + H(+). With respect to regulation, activated by light-induced dephosphorylation. Inhibited by dark-induced phosphorylation. Both reactions are catalyzed by PDRP1. Its function is as follows. Catalyzes the reversible phosphorylation of pyruvate and phosphate. This chain is Pyruvate, phosphate dikinase, found in Giardia intestinalis (Giardia lamblia).